Reading from the N-terminus, the 329-residue chain is Galactosylgalactosylxylosylprotein 3-beta-glucuronosyltransferase 2 (329 aa).

Topologically, residues 1–2 (MK) are cytoplasmic. A helical; Signal-anchor for type II membrane protein transmembrane segment spans residues 3–23 (SALFSRFFILLPWILIVIIML). The Lumenal portion of the chain corresponds to 24–329 (DVDTRRPAPP…YRLDTVKIEV (306 aa)). Residues 45–87 (VGRGGARLPPRRGGPDSGPGRGWEKRNESRPHARPRPEPPLPT) are disordered. Basic and acidic residues predominate over residues 66–81 (GWEKRNESRPHARPRP). A glycan (N-linked (GlcNAc...) asparagine) is linked at N71. UDP-alpha-D-glucuronate contacts are provided by residues 93–95 (PTY), D124, R161, R166, and 191–193 (DDD). D193 contributes to the Mn(2+) binding site. The tract at residues 240-249 (WRADRPFAID) is interaction with galactose moiety of substrate glycoprotein. The active-site Proton donor/acceptor is the E279. N298 carries N-linked (GlcNAc...) asparagine glycosylation. 306–308 (HTR) is a UDP-alpha-D-glucuronate binding site.

It belongs to the glycosyltransferase 43 family. Homodimer. Mn(2+) is required as a cofactor.

The protein resides in the golgi apparatus membrane. The enzyme catalyses 3-O-(beta-D-galactosyl-(1-&gt;3)-beta-D-galactosyl-(1-&gt;4)-beta-D-xylosyl)-L-seryl-[protein] + UDP-alpha-D-glucuronate = 3-O-(beta-D-GlcA-(1-&gt;3)-beta-D-Gal-(1-&gt;3)-beta-D-Gal-(1-&gt;4)-beta-D-Xyl)-L-seryl-[protein] + UDP + H(+). It functions in the pathway protein modification; protein glycosylation. Its function is as follows. Involved in the biosynthesis of L2/HNK-1 carbohydrate epitope on both glycolipids and glycoproteins. This Canis lupus familiaris (Dog) protein is Galactosylgalactosylxylosylprotein 3-beta-glucuronosyltransferase 2 (B3GAT2).